Reading from the N-terminus, the 597-residue chain is Probable HECT-type ubiquitin ligase-interacting protein creD (597 aa).

Disordered stretches follow at residues 375–398 (ELDP…GTLS) and 432–499 (LNIT…MATP). A compositionally biased stretch (basic and acidic residues) spans 443 to 455 (TDHESQNDSEHRR). A compositionally biased stretch (low complexity) spans 465 to 481 (PSSGSNSHSPSSPVLSR). The segment covering 482 to 492 (RPSDEVDHEHV) has biased composition (basic and acidic residues).

The protein belongs to the arrestin family. In terms of assembly, interacts with hulA.

In terms of biological role, component of the regulatory network controlling carbon source utilization through ubiquitination and deubiquitination involving creA, creB, creC, creD and acrB. May be involved in signaling by recognizing appropriately phosphorylated substrates via its arrestin domains and then recruit a HECT-type ubiquitin ligase such as hulA, leading to ubiquitination of the substrate, providing a link between ubiquitination and phosphorylation in protein regulation and stability. The polypeptide is Probable HECT-type ubiquitin ligase-interacting protein creD (creD) (Aspergillus oryzae (strain ATCC 42149 / RIB 40) (Yellow koji mold)).